A 761-amino-acid polypeptide reads, in one-letter code: uncharacterized protein (761 aa).

Methionine 1 is subject to N-acetylmethionine. Disordered regions lie at residues 1-82, 229-320, and 590-640; these read MEHQ…SSSS, SNII…SALA, and FNRA…PEQQ. Residues 13 to 27 are compositionally biased toward polar residues; it reads NSGSNRVTVYNGTTL. A compositionally biased stretch (low complexity) spans 28–45; sequence PTMPKSATPTSSSTTVTT. Polar residues-rich tracts occupy residues 244–259, 266–276, 590–604, and 627–640; these read TPVS…SSPE, NTTSSSSTSDH, FNRA…STDD, and SKNS…PEQQ.

Phosphorylated by CDC28.

This is an uncharacterized protein from Saccharomyces cerevisiae (strain ATCC 204508 / S288c) (Baker's yeast).